Consider the following 229-residue polypeptide: ACD11 homolog protein (229 aa).

The an N-acylsphingoid base 1-phosphate site is built by Glu84, Lys88, Arg123, Arg127, and His166.

The protein belongs to the GLTP family.

The sequence is that of ACD11 homolog protein from Arabidopsis thaliana (Mouse-ear cress).